Consider the following 73-residue polypeptide: Defensin-like protein 6 (73 aa).

A signal peptide spans 1–26 (MENKFFAAFFLLLVLFSSQEIIGGEG). Cystine bridges form between Cys29-Cys73, Cys40-Cys60, Cys46-Cys67, and Cys50-Cys69.

It belongs to the DEFL family.

It is found in the secreted. Functionally, confers broad-spectrum resistance to pathogens. The protein is Defensin-like protein 6 (PDF2.5) of Arabidopsis thaliana (Mouse-ear cress).